Reading from the N-terminus, the 208-residue chain is Thymidylate kinase (208 aa).

An ATP-binding site is contributed by 7–14 (GIDGAGKT).

The protein belongs to the thymidylate kinase family.

The catalysed reaction is dTMP + ATP = dTDP + ADP. Its function is as follows. Phosphorylation of dTMP to form dTDP in both de novo and salvage pathways of dTTP synthesis. The protein is Thymidylate kinase (tmk) of Xylella fastidiosa (strain 9a5c).